Here is a 349-residue protein sequence, read N- to C-terminus: UDP-N-acetylenolpyruvoylglucosamine reductase (349 aa).

Residues 17–187 (VNESADLIIQ…TAITLRLNKQ (171 aa)) form the FAD-binding PCMH-type domain. R163 is an active-site residue. Residue S233 is the Proton donor of the active site. The active site involves E328.

This sequence belongs to the MurB family. FAD serves as cofactor.

Its subcellular location is the cytoplasm. It catalyses the reaction UDP-N-acetyl-alpha-D-muramate + NADP(+) = UDP-N-acetyl-3-O-(1-carboxyvinyl)-alpha-D-glucosamine + NADPH + H(+). It participates in cell wall biogenesis; peptidoglycan biosynthesis. In terms of biological role, cell wall formation. This chain is UDP-N-acetylenolpyruvoylglucosamine reductase, found in Aliivibrio fischeri (strain ATCC 700601 / ES114) (Vibrio fischeri).